The chain runs to 123 residues: F-box protein PP2-B3 (123 aa).

The F-box domain maps to 10–56 (PSPFDGLPENCISNIISFTTPRDACFAASVSKAFESAVQSDSVWEKF).

The protein is F-box protein PP2-B3 (PP2B3) of Arabidopsis thaliana (Mouse-ear cress).